The sequence spans 277 residues: 2-dehydro-3-deoxyphosphooctonate aldolase (277 aa).

The protein belongs to the KdsA family.

Its subcellular location is the cytoplasm. The catalysed reaction is D-arabinose 5-phosphate + phosphoenolpyruvate + H2O = 3-deoxy-alpha-D-manno-2-octulosonate-8-phosphate + phosphate. It functions in the pathway carbohydrate biosynthesis; 3-deoxy-D-manno-octulosonate biosynthesis; 3-deoxy-D-manno-octulosonate from D-ribulose 5-phosphate: step 2/3. It participates in bacterial outer membrane biogenesis; lipopolysaccharide biosynthesis. The polypeptide is 2-dehydro-3-deoxyphosphooctonate aldolase (Dichelobacter nodosus (strain VCS1703A)).